The following is a 565-amino-acid chain: Polyadenylate-binding protein 1-A (565 aa).

RRM domains lie at 10–88 (SSLY…WSQR), 98–175 (GNVF…PFKS), 188–265 (TNVF…RAQK), and 284–362 (VNLY…LAQR). The interval 435–466 (YARGQPRQNGPRQNGGQPRQNGPRPDVSGAQP) is disordered. The span at 440–454 (PRQNGPRQNGGQPRQ) shows a compositional bias: polar residues. Residues 489 to 565 (SALNLQSIIN…REALEVLGSN (77 aa)) form the PABC domain.

Belongs to the polyadenylate-binding protein type-1 family.

It is found in the cytoplasm. The protein localises to the nucleus. Functionally, binds the poly(A) tail of mRNA. Appears to be an important mediator of the multiple roles of the poly(A) tail in mRNA biogenesis, stability and translation. This Dictyostelium discoideum (Social amoeba) protein is Polyadenylate-binding protein 1-A (pabpc1A).